A 437-amino-acid polypeptide reads, in one-letter code: MNYTTQMDAARKGLVTKEMEAVARKEGMDIEILRERVATGKIAIPANKNHHSLDAEGIGEGLRTKINVNLGISKDCPNIEVELDKVRTALEMKAEAIMDLSSFGKTEEFRKSLIEMSPAMIGTVPIYDAVGFYDKELQDITAQEFIDVVEKHAKEGVDFVTIHAGMNQETAAVFKRNPRLTNIVSRGGSLLYAWMELNKKENPFYQYYDQLLEICEKYDVTISLGDACRPGSIHDATDASQIKELMVLGELTLRAWEKNVQVMIEGPGHMAIDEIAANMVLEKKLCHGAPFYVLGPIVTDIAPGYDHITSAIGGAIAASHGADFLCYVTPAEHLRLPTLEDMKEGIIASKIAAHAGDIAKKVPGARKWDNEMSRARQQLNWEKMFELAIDPEKARRYREESKPEHDDSCTMCGKMCSMRNMNKIMEGKNINILREDD.

Residues Asn69, Met98, Tyr127, His163, 185–187 (SRG), 226–229 (DACR), and Glu265 each bind substrate. His269 lines the Zn(2+) pocket. Tyr292 is a binding site for substrate. His333 is a Zn(2+) binding site. Residues Cys409, Cys412, and Cys416 each coordinate [4Fe-4S] cluster.

Belongs to the ThiC family. The cofactor is [4Fe-4S] cluster.

It carries out the reaction 5-amino-1-(5-phospho-beta-D-ribosyl)imidazole + S-adenosyl-L-methionine = 4-amino-2-methyl-5-(phosphooxymethyl)pyrimidine + CO + 5'-deoxyadenosine + formate + L-methionine + 3 H(+). The protein operates within cofactor biosynthesis; thiamine diphosphate biosynthesis. Functionally, catalyzes the synthesis of the hydroxymethylpyrimidine phosphate (HMP-P) moiety of thiamine from aminoimidazole ribotide (AIR) in a radical S-adenosyl-L-methionine (SAM)-dependent reaction. In Alkaliphilus metalliredigens (strain QYMF), this protein is Phosphomethylpyrimidine synthase.